We begin with the raw amino-acid sequence, 546 residues long: Cryptochrome DASH, chloroplastic/mitochondrial (546 aa).

Residues 4 to 151 (TRVVIWFRND…TMERHWGSTL (148 aa)) enclose the Photolyase/cryptochrome alpha/beta domain. Residues 497–546 (PRRDFTEMGSPPGPRRGGGGGGRGRGRPGGSTPNRGTKARVASVYDTVYG) form a disordered region. Residues 511–525 (RRGGGGGGRGRGRPG) are compositionally biased toward gly residues.

Belongs to the DNA photolyase class-1 family. FAD serves as cofactor. (6R)-5,10-methylene-5,6,7,8-tetrahydrofolate is required as a cofactor.

The protein resides in the plastid. It is found in the chloroplast. Its subcellular location is the mitochondrion. In terms of biological role, may have a photoreceptor function. Binds ss- and ds-DNA in a sequence non-specific manner, lacks photolyase activity. The sequence is that of Cryptochrome DASH, chloroplastic/mitochondrial from Ostreococcus tauri.